Consider the following 177-residue polypeptide: Large ribosomal subunit protein uL6 (177 aa).

It belongs to the universal ribosomal protein uL6 family. As to quaternary structure, part of the 50S ribosomal subunit.

Its function is as follows. This protein binds to the 23S rRNA, and is important in its secondary structure. It is located near the subunit interface in the base of the L7/L12 stalk, and near the tRNA binding site of the peptidyltransferase center. The protein is Large ribosomal subunit protein uL6 of Bradyrhizobium diazoefficiens (strain JCM 10833 / BCRC 13528 / IAM 13628 / NBRC 14792 / USDA 110).